A 321-amino-acid polypeptide reads, in one-letter code: ATP-dependent 6-phosphofructokinase (321 aa).

G12 lines the ATP pocket. 22 to 26 (RGVVR) contacts ADP. ATP contacts are provided by residues 73–74 (RF) and 103–106 (GDGS). D104 lines the Mg(2+) pocket. 127–129 (TID) contacts substrate. Catalysis depends on D129, which acts as the Proton acceptor. An ADP-binding site is contributed by R156. Residues R164 and 171–173 (MGR) each bind substrate. ADP contacts are provided by residues 187–189 (GCE), K213, and 215–217 (KRH). Residues E224, R245, and 251-254 (HTQR) each bind substrate.

Belongs to the phosphofructokinase type A (PFKA) family. ATP-dependent PFK group I subfamily. Prokaryotic clade 'B1' sub-subfamily. As to quaternary structure, homotetramer. Requires Mg(2+) as cofactor.

The protein localises to the cytoplasm. It carries out the reaction beta-D-fructose 6-phosphate + ATP = beta-D-fructose 1,6-bisphosphate + ADP + H(+). Its pathway is carbohydrate degradation; glycolysis; D-glyceraldehyde 3-phosphate and glycerone phosphate from D-glucose: step 3/4. Its activity is regulated as follows. Allosterically activated by ADP and other diphosphonucleosides, and allosterically inhibited by phosphoenolpyruvate. Functionally, catalyzes the phosphorylation of D-fructose 6-phosphate to fructose 1,6-bisphosphate by ATP, the first committing step of glycolysis. The chain is ATP-dependent 6-phosphofructokinase from Glaesserella parasuis serovar 5 (strain SH0165) (Haemophilus parasuis).